Here is a 942-residue protein sequence, read N- to C-terminus: NBPF family member NBPF8 (942 aa).

Residues alanine 89–leucine 130 are a coiled coil. Residues lysine 161 to serine 203 form a disordered region. Acidic residues predominate over residues glutamate 165 to glutamate 180. The 95-residue stretch at glutamate 165–serine 259 folds into the Olduvai 1 domain. Basic and acidic residues predominate over residues glutamate 190–glutamate 201. A coiled-coil region spans residues lysine 339–leucine 401. Olduvai domains lie at glutamate 436–proline 528, glutamate 529–proline 617, serine 620–aspartate 675, glutamate 676–proline 767, serine 770–lysine 843, and lysine 844–phenylalanine 904. Disordered regions lie at residues glutamate 451–serine 474 and proline 528–serine 566. Acidic residues-rich tracts occupy residues asparagine 530 to glutamate 539 and glutamate 550 to aspartate 562. Residues glycine 831–arginine 849 are compositionally biased toward basic residues. Residues glycine 831–leucine 863 form a disordered region.

It belongs to the NBPF family. Expressed in the mammary gland.

Its subcellular location is the cytoplasm. The sequence is that of NBPF family member NBPF8 from Homo sapiens (Human).